Consider the following 547-residue polypeptide: MFS-type transporter ltbE (547 aa).

A disordered region spans residues 1 to 23; that stretch reads MEIAAETTGPAGVTTDVTNAEES. The next 13 membrane-spanning stretches (helical) occupy residues 33 to 53, 74 to 94, 104 to 124, 135 to 155, 165 to 185, 195 to 215, 240 to 260, 267 to 287, 310 to 330, 343 to 363, 370 to 390, 399 to 419, and 432 to 452; these read QGWALASLTVAFMSICLVLAI, DIGWYGSSYLIAQMALLPTCG, WVYCLSLAIFELGSIIAAVAP, ISGLGAAGLVSGTTTILSYCV, PIVLGMYNIGSAMGPLIGGSI, FIFWINLPFGAVALVLVWFTL, ATLLLGATTCLNLALQWGGIV, KVFGCLIGFGLLLITFLCLQW, GFMMLVQVAIVVQSYFWPIYF, INLLPLIISNSLSTLCAGSLA, VPFMWVGPLILATGGGLYQLV, WIGFQILSGVGYGCCSQMPIL, and TGLVMIMFFQMLGGALAPSVG. The N-linked (GlcNAc...) asparagine glycan is linked to Asn463. Residues 506-526 form a helical membrane-spanning segment; it reads VFWVGVATPALAWIASWAMEW.

The protein belongs to the major facilitator superfamily. TCR/Tet family.

Its subcellular location is the cell membrane. In terms of biological role, MFS-type transporter; part of the gene cluster that mediates the biosynthesis of luteodienoside A, a glycosylated polyketide consisting of an unusual 1-O-beta-D-glucopyranosyl-myo-inositol (glucinol) ester of 3-hydroxy-2,2,4-trimethylocta-4,6-dienoic acid. LtbE is probably involved in the secretion of luteodienoside A. The sequence is that of MFS-type transporter ltbE from Aspergillus luteorubrus.